Reading from the N-terminus, the 557-residue chain is uncharacterized protein (557 aa).

Positions 2 to 45 (NEDETSILNKKMEKIEVEMAEFERLGAEREKEAVERIVQEENQN) form a coiled coil. 4 disordered regions span residues 39–62 (VQEE…KSRK), 101–127 (NRTY…RKNF), 356–402 (PSPS…YPSN), and 536–557 (ANAT…YDHI). Composition is skewed to polar residues over residues 101 to 110 (NRTYYKNSQG), 358 to 380 (PSFQ…SSNA), 390 to 400 (DSATYPTSIYP), and 536 to 548 (ANAT…NLDT).

It localises to the cytoplasm. Its subcellular location is the nucleus. This is an uncharacterized protein from Schizosaccharomyces pombe (strain 972 / ATCC 24843) (Fission yeast).